Here is an 848-residue protein sequence, read N- to C-terminus: MKIHSSDHSWLLLAVLVILLSFSGALSSDDKEKKTKSVDKKKEVTYDGTSLIINGNRELLYSGSIHYPRSTPEMWPNIIKRAKQGGLNTIQTYVFWNVHEPEQGKFNFSGRADLVKFIKLIEKNGLYVTLRLGPFIQAEWTHGGLPYWLREVPGIFFRTDNEPFKEHTERYVKVVLDMMKEEKLFASQGGPIILGQIENEYSAVQRAYKEDGLNYIKWASKLVHSMDLGIPWVMCKQNDAPDPMINACNGRHCGDTFPGPNKDNKPSLWTENWTTQFRVFGDPPAQRSVEDIAYSVARFFSKNGTHVNYYMYHGGTNFGRTSAHYVTTRYYDDAPLDEFGLEREPKYGHLKHLHNALNLCKKALLWGQPRVEKPSNETEIRYYEQPGTKVCAAFLANNNTEAAEKIKFRGKEYLIPHRSISILPDCKTVVYNTGEIISHHTSRNFMKSKKANKNFDFKVFTESVPSKIKGDSFIPVELYGLTKDESDYGWYTTSFKIDDNDLSKKKGGKPNLRIASLGHALHVWLNGEYLGNGHGSHEEKSFVFQKPVTLKEGENHLTMLGVLTGFPDSGSYMEHRYTGPRSVSILGLGSGTLDLTEENKWGNKVGMEGERLGIHAEEGLKKVKWEKASGKEPGMTWYQTYFDAPESQSAAAIRMNGMGKGLIWVNGEGVGRYWMSFLSPLGQPTQIEYHIPRSFLKPKKNLLVIFEEEPNVKPELIDFVIVNRDTVCSYIGENYTPSVRHWTRKNDQVQAITDDVHLTANLKCSGTKKISAVEFASFGNPNGTCGNFTLGSCNAPVSKKVVEKYCLGKAECVIPVNKSTFEQDKKDSCPKVEKKLAVQVKCGRDKKN.

Positions 1–27 (MKIHSSDHSWLLLAVLVILLSFSGALS) are cleaved as a signal peptide. Residue Asn107 is glycosylated (N-linked (GlcNAc...) asparagine). The active-site Proton donor is the Glu200. Glu271 functions as the Nucleophile in the catalytic mechanism. N-linked (GlcNAc...) asparagine glycosylation is found at Asn272, Asn303, Asn376, Asn398, Asn782, Asn787, and Asn817. Residues 754–843 (DDVHLTANLK…KKLAVQVKCG (90 aa)) form the SUEL-type lectin domain.

Belongs to the glycosyl hydrolase 35 family. In terms of tissue distribution, ubiquitous, with higher expression levels in roots, flowers and siliques.

The protein resides in the secreted. The protein localises to the extracellular space. It is found in the apoplast. The catalysed reaction is Hydrolysis of terminal non-reducing beta-D-galactose residues in beta-D-galactosides.. This Arabidopsis thaliana (Mouse-ear cress) protein is Beta-galactosidase 13 (BGAL13).